Reading from the N-terminus, the 255-residue chain is D-aminoacyl-tRNA deacylase (255 aa).

Belongs to the DtdA deacylase family. As to quaternary structure, monomer. Requires Zn(2+) as cofactor.

The catalysed reaction is a D-aminoacyl-tRNA + H2O = a tRNA + a D-alpha-amino acid + H(+). The enzyme catalyses glycyl-tRNA(Ala) + H2O = tRNA(Ala) + glycine + H(+). D-aminoacyl-tRNA deacylase with broad substrate specificity. By recycling D-aminoacyl-tRNA to D-amino acids and free tRNA molecules, this enzyme counteracts the toxicity associated with the formation of D-aminoacyl-tRNA entities in vivo. The sequence is that of D-aminoacyl-tRNA deacylase from Methanocaldococcus jannaschii (strain ATCC 43067 / DSM 2661 / JAL-1 / JCM 10045 / NBRC 100440) (Methanococcus jannaschii).